We begin with the raw amino-acid sequence, 244 residues long: Phosphoadenosine 5'-phosphosulfate reductase (244 aa).

The Nucleophile; cysteine thiosulfonate intermediate role is filled by cysteine 239.

The protein belongs to the PAPS reductase family. CysH subfamily.

The protein resides in the cytoplasm. It catalyses the reaction [thioredoxin]-disulfide + sulfite + adenosine 3',5'-bisphosphate + 2 H(+) = [thioredoxin]-dithiol + 3'-phosphoadenylyl sulfate. Its pathway is sulfur metabolism; hydrogen sulfide biosynthesis; sulfite from sulfate: step 3/3. Catalyzes the formation of sulfite from phosphoadenosine 5'-phosphosulfate (PAPS) using thioredoxin as an electron donor. The sequence is that of Phosphoadenosine 5'-phosphosulfate reductase from Shigella boydii serotype 4 (strain Sb227).